Consider the following 642-residue polypeptide: Uromodulin (642 aa).

The N-terminal stretch at 1-26 is a signal peptide; it reads MGQLSSLTSVWMVVVVTSWVIIAANI. Positions 32-64 constitute an EGF-like 1 domain; that stretch reads RSCSECHSNATCMEDGMVTTCSCLVGFTGSGFE. 21 disulfides stabilise this stretch: Cys34–Cys43, Cys37–Cys52, Cys54–Cys65, Cys71–Cys85, Cys79–Cys94, Cys96–Cys108, Cys114–Cys128, Cys122–Cys137, Cys139–Cys150, Cys152–Cys163, Cys157–Cys172, Cys176–Cys269, Cys197–Cys284, Cys219–Cys257, Cys225–Cys289, Cys250–Cys258, Cys299–Cys308, Cys302–Cys317, Cys319–Cys348, Cys336–Cys426, and Cys367–Cys390. N-linked (GlcNAc...) asparagine glycosylation is present at Asn40. An EGF-like 2; calcium-binding domain is found at 67–109; it reads DLDECAIPGAHNCSEGSSCMNTLGSYLCTCPDGFRLTPGLGCI. The N-linked (GlcNAc...) asparagine glycan is linked to Asn78. An EGF-like 3; calcium-binding domain is found at 110–151; the sequence is DVDECSEPGLSRCHALATCINNKGNYSCVCPAGYRGDGQHCE. Residue Asn134 is glycosylated (N-linked (GlcNAc...) asparagine). The interval 152 to 173 is beta hairpin; the sequence is CSPGSCGPGLDCVPVGDALVCA. Residues 174 to 293 are D10C; the sequence is DPCQEHRILD…CYLAYCTDPT (120 aa). N-linked (GlcNAc...) asparagine glycosylation is found at Asn234 and Asn246. The N-linked (GlcNAc...) asparagine glycan is linked to Asn277. Residues 294–325 enclose the EGF-like 4 domain; that stretch reads SVLGTCEECSVEEDCKSHDGMWSCQCKQDFNV. Residue Asn324 is glycosylated (N-linked (GlcNAc...) asparagine). Residues 335-430 are ZP-N; sequence ECRPNDIKVS…KINFECSYPL (96 aa). Residues 335-590 form the ZP domain; sequence ECRPNDIKVS…PTCSGTRFRS (256 aa). N-linked (GlcNAc...) asparagine glycans are attached at residues Asn397 and Asn448. A flexible ZP-N/ZP-C linker; important for secretion and polymerization into filaments region spans residues 431–454; the sequence is DMKVSLETSLQPIVSSLNISVGGT. Residues 455-465 form an internal hydrophobic patch (IHP) region; that stretch reads GMFTVRMALFQ. The interval 455–590 is ZP-C; sequence GMFTVRMALF…PTCSGTRFRS (136 aa). Cystine bridges form between Cys507–Cys567, Cys528–Cys583, and Cys572–Cys579. The N-linked (GlcNAc...) asparagine glycan is linked to Asn514. The essential for cleavage by HPN stretch occupies residues 587–590; sequence RFRS. An external hydrophobic patch (EHP); regulates polymerization into filaments region spans residues 599 to 607; sequence VLNLGPITR. Ser620 carries the GPI-anchor amidated serine lipid modification. Positions 621–642 are cleaved as a propeptide — removed in mature form; it reads SLGFLKVCLPLLLSATLTLMFQ.

Homodimer that then polymerizes into long filaments. The filaments can additionally assemble laterally to form a sheet. The filaments consist of a zigzag-shaped backbone with laterally protruding arms which interact with bacterial adhesin fimH. Two fimH molecules can bind to a single UMOD monomer. In terms of processing, N-glycosylated. Post-translationally, proteolytically cleaved at a conserved C-terminal proteolytic cleavage site to generate the secreted form found in urine. This cleavage is catalyzed by HPN. Detected in kidney and pancreas.

The protein resides in the apical cell membrane. It localises to the basolateral cell membrane. The protein localises to the cell projection. It is found in the cilium membrane. Its subcellular location is the secreted. Functionally, functions in biogenesis and organization of the apical membrane of epithelial cells of the thick ascending limb of Henle's loop (TALH), where it promotes formation of complex filamentous gel-like structure that may play a role in the water barrier permeability. May serve as a receptor for binding and endocytosis of cytokines (IL-1, IL-2) and TNF. Facilitates neutrophil migration across renal epithelia. Its function is as follows. In the urine, may contribute to colloid osmotic pressure, retards passage of positively charged electrolytes, and inhibits formation of liquid containing supersaturated salts and subsequent formation of salt crystals. Protects against urinary tract infections by binding to type 1 fimbriated E.coli. Binds to bacterial adhesin fimH which mediates the stable formation of bacterial aggregates, prevents the binding of E.coli to uroplakins UPK1A and UPK1B which act as urothelial receptors for type I fimbriae, and allows for pathogen clearance through micturation. Also promotes aggregation of other bacteria including K.pneumoniae, P.aeruginosa and S.mitis and so may also protect against other uropathogens. The polypeptide is Uromodulin (UMOD) (Canis lupus familiaris (Dog)).